The sequence spans 262 residues: Intron-encoded DNA endonuclease ai2b (262 aa).

The protein belongs to the LAGLIDADG endonuclease family.

It localises to the mitochondrion. Functionally, mitochondrial DNA endonuclease involved in intron homing. The protein is Intron-encoded DNA endonuclease ai2b (ai2b) of Dictyostelium discoideum (Social amoeba).